Reading from the N-terminus, the 355-residue chain is Tyrosine recombinase XerC (355 aa).

The 86-residue stretch at 4 to 89 (TQFDGDIDSF…AVRGFFAWAY (86 aa)) folds into the Core-binding (CB) domain. Residues 138 to 180 (DDGGAAAASGSGKAAGKTADKSADTVNRSEAPARADKRDNARV) are disordered. A compositionally biased stretch (low complexity) spans 141–154 (GAAAASGSGKAAGK). Residues 158–349 (KSADTVNRSE…SIEQLKNRYG (192 aa)) enclose the Tyr recombinase domain. Positions 168-178 (APARADKRDNA) are enriched in basic and acidic residues. Active-site residues include Arg200, Lys224, His301, Arg304, and His327. The O-(3'-phospho-DNA)-tyrosine intermediate role is filled by Tyr336.

Belongs to the 'phage' integrase family. XerC subfamily. Forms a cyclic heterotetrameric complex composed of two molecules of XerC and two molecules of XerD.

It is found in the cytoplasm. Functionally, site-specific tyrosine recombinase, which acts by catalyzing the cutting and rejoining of the recombining DNA molecules. The XerC-XerD complex is essential to convert dimers of the bacterial chromosome into monomers to permit their segregation at cell division. It also contributes to the segregational stability of plasmids. The sequence is that of Tyrosine recombinase XerC from Bifidobacterium longum subsp. infantis (strain ATCC 15697 / DSM 20088 / JCM 1222 / NCTC 11817 / S12).